Consider the following 145-residue polypeptide: Selenoprotein M (145 aa).

A signal peptide spans 1–23 (MSILLSPPSLLLLLAALVAPATS). Catalysis depends on nucleophile residues cysteine 45 and selenocysteine 48. Positions 45 to 48 (CGGU) form a cross-link, cysteinyl-selenocysteine (Cys-Sec). A non-standard amino acid (selenocysteine) is located at residue selenocysteine 48. Positions 125 to 145 (PPEYLWAPAKPPEEASEHDDL) are disordered.

The protein belongs to the selenoprotein M/F family. Widely expressed. Highly expressed in brain.

The protein resides in the cytoplasm. The protein localises to the perinuclear region. Its subcellular location is the endoplasmic reticulum. It is found in the golgi apparatus. Functionally, may function as a thiol-disulfide oxidoreductase that participates in disulfide bond formation. The sequence is that of Selenoprotein M from Mus musculus (Mouse).